Consider the following 927-residue polypeptide: MEEPGGLHESAEDLFHFNVGGWHFSVPRSKLAQFPDSLLWKEASALTSSENQRLFIDRDGSTFRHVHYYLYTSKLSFSSCAELNLLYEQALGLQLMPLLQTLDNLKEGRHHLRVRPADIPVAERASLNYWRTWKCISKPSDFPIKSPAFTGLHDKAPLGLMDTPLLDTEEEVHYCFLPLDLVAKYPSLVTEDNLLWLAETVALIECECSEFRFIVNFLRSHKILLPDNFSNIDVLEAEVEILEIPELTEAVRLYRMNMGGCSRTSCPPLSPGKGGRTASVESVKPLYLMALGLLVKYPDSALGQLRIESTLDGSRLYITGNGALFQHVRNWLGTCRLPLTETISEVYELCAFLDKRDITYEPMKVALKTHLEPRTLLPVDVLSEEWTAEVTIYSPQQIIKLYVGSHWYATTLQTLMKYPELLSNTQRVYWIAYGQTLLIHGDGQMFRHILNFLRLGKLFLPSEFKEWPLFCQEVEEYHIPALSEALAQCEAYKSWTQEKESENEEAFPIRKLHVVTEGTGPMAEFSRDAKETTACMPVDFQECSDRTPWNKAKGNLTRSSQMEEAEQYTRTIQVSLCRNAKRGGNPSTYSHCSGLCANPRHWGGHSESPPKKKCTTINLTQKPDAKDPPVTPMQKLISLVREWDMVNCKQWEFQPLPASRSSSVEEASLHVPSGSEAAPQPGTSAAWKAHSITSEKDAGPQTGPGAGVKDKGPEPTFKPYFPTKRAITLKDWGKQRPKDRESPAPEQPLPNANGTDNPGAILKVAHPPVVGNDGSCMFFEDSIIYTTQMDNIKHTSLTASPQLREVTFLSFSLSWEEMFYAQKCHRFLTDIILDSIRQKDPKAITAKVVSLAYRLWTLNISPKQFVVDLLAIAGFKDDRHTQERLYSWVELTLPFARKYGRCVDLLIQRGLSRSVSYSVLGKYLHEG.

The region spanning 18-72 is the BTB 1 domain; it reads NVGGWHFSVPRSKLAQFPDSLLWKEASALTSSENQRLFIDRDGSTFRHVHYYLYT. Residue Ser270 is modified to Phosphoserine. Positions 399–486 constitute a BTB 2 domain; it reads IKLYVGSHWY…YHIPALSEAL (88 aa). A disordered region spans residues 664–760; sequence VEEASLHVPS…NANGTDNPGA (97 aa). Residues 731–743 are compositionally biased toward basic and acidic residues; sequence DWGKQRPKDRESP.

In terms of assembly, identified in a complex with ZNF541, HDAC1 and HSPA2. Identified in a complex with ZNF541 and HDAC1. Identified in a complex with HDAC1, HDAC2, DNTTIP1 and ZNF541. In terms of tissue distribution, detected in adult testis.

The protein localises to the nucleus. Transcription regulator which is essential for male fertility and for the completion of meiotic prophase in spermatocytes. Regulates progression of the pachytene stage of meiotic prophase and promotes the transcriptional activation activity ZNF541. Required for the organization of chromosomes during metaphase I. The sequence is that of BTB/POZ domain-containing protein KCTD19 (Kctd19) from Mus musculus (Mouse).